Consider the following 572-residue polypeptide: Urease subunit alpha (572 aa).

The Urease domain occupies 132 to 572 (GGFDSHIHFI…LPMAQRYFMY (441 aa)). The Ni(2+) site is built by His-137, His-139, and Lys-220. The residue at position 220 (Lys-220) is an N6-carboxylysine. Residue His-222 participates in substrate binding. The Ni(2+) site is built by His-249 and His-275. The active-site Proton donor is His-323. Asp-363 serves as a coordination point for Ni(2+).

The protein belongs to the metallo-dependent hydrolases superfamily. Urease alpha subunit family. In terms of assembly, heterotrimer of UreA (gamma), UreB (beta) and UreC (alpha) subunits. Three heterotrimers associate to form the active enzyme. The cofactor is Ni cation. Carboxylation allows a single lysine to coordinate two nickel ions.

The protein resides in the cytoplasm. The catalysed reaction is urea + 2 H2O + H(+) = hydrogencarbonate + 2 NH4(+). The protein operates within nitrogen metabolism; urea degradation; CO(2) and NH(3) from urea (urease route): step 1/1. The chain is Urease subunit alpha from Bradyrhizobium diazoefficiens (strain JCM 10833 / BCRC 13528 / IAM 13628 / NBRC 14792 / USDA 110).